A 130-amino-acid chain; its full sequence is kinetoplast-associated protein 2-2 (130 aa).

Positions 1–10 (MLRRTVSNFA) are excised as a propeptide. Positions 95–130 (ETKQAQRAKAQKAQKKPKSAKSKVKKAAKKAKKSKK) are disordered. A compositionally biased stretch (basic residues) spans 103–130 (KAQKAQKKPKSAKSKVKKAAKKAKKSKK).

This sequence belongs to the KAP family. Associates with the kinetoplast DNA network.

Its subcellular location is the mitochondrion matrix. The protein localises to the kinetoplast. Functionally, histone H1-like DNA-binding protein involved in the organization and segregation of kinetoplast DNA (kDNA). The mitochondrial DNA of kinetoplastid protozoa consists of about 5,000 minicircles and 20 to 30 maxicircles. These circular DNAs are held together by catenation into a highly organized compact disk structure referred to as a kinetoplast DNA (kDNA) network. Binds preferentially to a specific fragment of minicircle DNA and is able to compact kDNA networks through DNA charge neutralization and condensation. This is kinetoplast-associated protein 2-2 (KAP2-2) from Crithidia fasciculata.